Here is a 350-residue protein sequence, read N- to C-terminus: Streptomycin biosynthesis operon possible regulatory protein (350 aa).

Polar residues predominate over residues 1–10; sequence MEHISGNSPE. 3 disordered regions span residues 1–20, 168–189, and 211–258; these read MEHI…AAVT, AGVP…LDPT, and AAQA…SRAD. 2 stretches are compositionally biased toward basic and acidic residues: residues 177–189 and 223–242; these read IGRD…LDPT and DVRK…DRQQ.

In Streptomyces griseus, this protein is Streptomycin biosynthesis operon possible regulatory protein (strR).